Here is a 566-residue protein sequence, read N- to C-terminus: Serine/threonine-protein kinase haspin homolog (566 aa).

Residues 248 to 566 enclose the Protein kinase domain; sequence LLNTKKIGEG…HCANYLFNLN (319 aa). Residues 254 to 262, K282, 377 to 382, 418 to 423, and 456 to 458 each bind ATP; these read IGEGAYGEV, KFAGSD, DLHLGN, and DYT. The active-site Proton acceptor is D418.

Belongs to the protein kinase superfamily. Ser/Thr protein kinase family. Haspin subfamily. Interacts with pds5 and vtd. Requires Mg(2+) as cofactor.

The protein resides in the nucleus lamina. It localises to the chromosome. Its subcellular location is the cytoplasm. It is found in the cytoskeleton. The protein localises to the spindle. The catalysed reaction is L-seryl-[protein] + ATP = O-phospho-L-seryl-[protein] + ADP + H(+). It catalyses the reaction L-threonyl-[protein] + ATP = O-phospho-L-threonyl-[protein] + ADP + H(+). Functionally, serine/threonine-protein kinase that phosphorylates histone H3 at 'Thr-4' (H3T3ph) during mitosis and interphase. Function is essential for chromosome organization during mitosis and genome organization in interphase cells, thus playing a functional role in gene regulation. During mitosis, may act through H3T3ph to both position and modulate activation of AURKB and other components of the chromosomal passenger complex (CPC) at centromeres to ensure proper chromatid cohesion, metaphase alignment and normal progression through the cell cycle. During interphase, associates with the cohesion complex and mediates pds5 binding to chromatin to ensure correct sister chromatid cohesion, chromatin organization, and also functions with Pds5-cohesin to modify Polycomb-dependent homeotic transformations. Function during interphase is required for insulator activity, nuclear compaction, heterochromatin-induced position-effect variegation and PcG-mediated pairing-sensitive silencing. In Drosophila melanogaster (Fruit fly), this protein is Serine/threonine-protein kinase haspin homolog.